Reading from the N-terminus, the 125-residue chain is Conopressin-conophysin, isoform 1 (125 aa).

An N-terminal signal peptide occupies residues 1-22; it reads MQMGRPTLLPCLLLLLVLSTQA. Residues C23 and C28 are joined by a disulfide bond. G31 carries the post-translational modification Glycine amide. The propeptide occupies 32–39; the sequence is GKRDVHMI. Cystine bridges form between C45–C85, C48–C59, C53–C75, C60–C65, C92–C112, C104–C124, and C113–C118.

It belongs to the vasopressin/oxytocin family. As to expression, expressed by the venom gland.

The protein localises to the secreted. Functionally, targets vasopressin-oxytocin related receptors. The chain is Conopressin-conophysin, isoform 1 from Conus monile (Necklace cone).